Consider the following 87-residue polypeptide: Small ribosomal subunit protein bS18 (87 aa).

Belongs to the bacterial ribosomal protein bS18 family. As to quaternary structure, part of the 30S ribosomal subunit. Forms a tight heterodimer with protein bS6.

Binds as a heterodimer with protein bS6 to the central domain of the 16S rRNA, where it helps stabilize the platform of the 30S subunit. The protein is Small ribosomal subunit protein bS18 of Sulfurovum sp. (strain NBC37-1).